The chain runs to 133 residues: Maturin (133 aa).

This sequence belongs to the MTURN family.

The protein resides in the cytoplasm. May be involved in early neuronal development. May play a role in promoting megakaryocyte differentiation. The polypeptide is Maturin (mturn) (Danio rerio (Zebrafish)).